The chain runs to 169 residues: Chorion protein E1 (169 aa).

An N-terminal signal peptide occupies residues methionine 1–alanine 19. 2 Tetradecapeptide repeats span residues glycine 114–serine 127 and glycine 128–serine 141. The tract at residues alanine 119–serine 169 is disordered. Positions threonine 142–alanine 152 are enriched in polar residues.

Functionally, this protein is one of two components of the prominent 'filler' that helps mold the shape of aeropyle crowns. This Antheraea polyphemus (Polyphemus moth) protein is Chorion protein E1.